The chain runs to 281 residues: 2-dehydro-3-deoxyphosphooctonate aldolase (281 aa).

Belongs to the KdsA family.

The protein localises to the cytoplasm. The catalysed reaction is D-arabinose 5-phosphate + phosphoenolpyruvate + H2O = 3-deoxy-alpha-D-manno-2-octulosonate-8-phosphate + phosphate. The protein operates within carbohydrate biosynthesis; 3-deoxy-D-manno-octulosonate biosynthesis; 3-deoxy-D-manno-octulosonate from D-ribulose 5-phosphate: step 2/3. Its pathway is bacterial outer membrane biogenesis; lipopolysaccharide biosynthesis. This chain is 2-dehydro-3-deoxyphosphooctonate aldolase, found in Pseudomonas fluorescens (strain Pf0-1).